The primary structure comprises 207 residues: Protein phosphatase inhibitor 2 (207 aa).

Disordered regions lie at residues 1–44, 65–97, and 110–146; these read MAAS…SKKS, LMKI…ALTP, and ESLE…EMKR. A2 bears the N-acetylalanine mark. Residues 12 to 17 form a required for binding PPP1CC region; that stretch reads KGILKN. The span at 19 to 28 shows a compositional bias: low complexity; it reads SSTTSSVVST. Basic and acidic residues predominate over residues 35–44; it reads SVDEELSKKS. Residues 43–55 are required for binding PPP1CC; it reads KSQKWDEMSILAT. A Phosphoserine; by ATM modification is found at S44. Position 73 is a phosphothreonine; by GSK3 (T73). Over residues 80 to 91 the composition is skewed to acidic residues; the sequence is ADDEDALSDSET. 2 positions are modified to phosphoserine: S87 and S89. A phosphothreonine mark is found at T92 and T96. Over residues 112 to 122 the composition is skewed to basic and acidic residues; sequence LEPKYRVREQE. S123, S124, S129, and S132 each carry phosphoserine. A compositionally biased stretch (acidic residues) spans 123–132; the sequence is SSGDEDSDLS. Residues 133–145 are compositionally biased toward basic and acidic residues; the sequence is PEEREKKRQFEMK. Positions 149-152 are required for binding PPP1CC catalytic center, displacing metal ions and inhibition of PPP1CC catalytic activity; that stretch reads HYNE. The tract at residues 165–207 is disordered; that stretch reads KDLNDEEEDEEMSETAAGESMNMEESSQGSATSDQLQNKSQSS. Positions 168–177 are enriched in acidic residues; the sequence is NDEEEDEEMS. Positions 187–207 are enriched in polar residues; the sequence is MEESSQGSATSDQLQNKSQSS.

Belongs to the protein phosphatase inhibitor 2 family. In terms of assembly, heterodimer with PP1. Post-translationally, phosphorylation on Ser-44 by ATM activates PP1 by dissociating the PP1-PPP1R2 complex. Phosphorylation on Thr-73 by GSK3 activates PP1 by dissociating the PP1-PPP1R2 complex.

Inhibitor of protein-phosphatase 1. In Bos taurus (Bovine), this protein is Protein phosphatase inhibitor 2 (PPP1R2).